Here is a 154-residue protein sequence, read N- to C-terminus: SsrA-binding protein (154 aa).

A disordered region spans residues 126-154; that stretch reads GKKKYDKREDMKKKEAQREVERAFRERQK. Residues 131 to 154 are compositionally biased toward basic and acidic residues; it reads DKREDMKKKEAQREVERAFRERQK.

This sequence belongs to the SmpB family.

It is found in the cytoplasm. In terms of biological role, required for rescue of stalled ribosomes mediated by trans-translation. Binds to transfer-messenger RNA (tmRNA), required for stable association of tmRNA with ribosomes. tmRNA and SmpB together mimic tRNA shape, replacing the anticodon stem-loop with SmpB. tmRNA is encoded by the ssrA gene; the 2 termini fold to resemble tRNA(Ala) and it encodes a 'tag peptide', a short internal open reading frame. During trans-translation Ala-aminoacylated tmRNA acts like a tRNA, entering the A-site of stalled ribosomes, displacing the stalled mRNA. The ribosome then switches to translate the ORF on the tmRNA; the nascent peptide is terminated with the 'tag peptide' encoded by the tmRNA and targeted for degradation. The ribosome is freed to recommence translation, which seems to be the essential function of trans-translation. The protein is SsrA-binding protein of Anoxybacillus flavithermus (strain DSM 21510 / WK1).